Consider the following 115-residue polypeptide: MLLKSTTRHIRIFAGTVENNELVPDDQALTLDIDPDNELNWNDTAVEQVYRKFDELVESYSGSDLTEYNLRCMGSDLEHFVRSLLQSGEISYNLGSRVNNYSLGLPRVDVDAEAK.

It belongs to the complex I NdhM subunit family. NDH-1 can be composed of about 15 different subunits; different subcomplexes with different compositions have been identified which probably have different functions.

It localises to the cellular thylakoid membrane. The enzyme catalyses a plastoquinone + NADH + (n+1) H(+)(in) = a plastoquinol + NAD(+) + n H(+)(out). The catalysed reaction is a plastoquinone + NADPH + (n+1) H(+)(in) = a plastoquinol + NADP(+) + n H(+)(out). NDH-1 shuttles electrons from an unknown electron donor, via FMN and iron-sulfur (Fe-S) centers, to quinones in the respiratory and/or the photosynthetic chain. The immediate electron acceptor for the enzyme in this species is believed to be plastoquinone. Couples the redox reaction to proton translocation, and thus conserves the redox energy in a proton gradient. Cyanobacterial NDH-1 also plays a role in inorganic carbon-concentration. This is NAD(P)H-quinone oxidoreductase subunit M from Trichodesmium erythraeum (strain IMS101).